The sequence spans 675 residues: Neurexin-3b-beta (675 aa).

The first 30 residues, 1–30 (MRPHFKTRYPQWLSCMLPLVTGCVFGAVWG), serve as a signal peptide directing secretion. Residues 31–599 (SNLDSTVVLS…EVIRESSSTT (569 aa)) lie on the Extracellular side of the membrane. Residues 81–281 (ATYIFGKGGG…HANIKINGSV (201 aa)) enclose the Laminin G-like domain. Disordered stretches follow at residues 313 to 337 (TTLS…DIVS) and 490 to 534 (FKPK…MNNR). The segment covering 325–335 (SPPTIQTTDDI) has biased composition (polar residues). The chain crosses the membrane as a helical span at residues 600–620 (GMVVGIVSAAALCILILLYAM). Residues 621-675 (YKYRNRDEGSYQVDETRNYISNSAQNNGTVVKDKQPSTKGASNKRPKDKDKEYYV) lie on the Cytoplasmic side of the membrane. The tract at residues 642 to 675 (NSAQNNGTVVKDKQPSTKGASNKRPKDKDKEYYV) is disordered. Residues 665-675 (RPKDKDKEYYV) show a composition bias toward basic and acidic residues.

The protein belongs to the neurexin family. Processed by alpha-secretase leading to the formation of an extracellular soluble protein as well as a C-terminal membrane-embedded fragment (CTF). Proteolysis of these CTFs by gamma-secretase releases intracellular domains (ICDs) and extracellular peptides.

Its subcellular location is the membrane. Neuronal cell surface protein that may be involved in cell recognition and cell adhesion. This chain is Neurexin-3b-beta (nrxn3b), found in Danio rerio (Zebrafish).